A 632-amino-acid polypeptide reads, in one-letter code: Chaperone protein HtpG (632 aa).

The segment at 1 to 339 (MTQQTMSFQA…SSDLPLNVSR (339 aa)) is a; substrate-binding. The tract at residues 340–559 (EILQESRDVK…DNDMSGYLQR (220 aa)) is b. A c region spans residues 560–632 (MLKAAGQSAP…TNALLLSRAA (73 aa)).

The protein belongs to the heat shock protein 90 family. As to quaternary structure, homodimer.

It is found in the cytoplasm. Functionally, molecular chaperone. Has ATPase activity. This is Chaperone protein HtpG from Burkholderia pseudomallei (strain 668).